We begin with the raw amino-acid sequence, 325 residues long: tRNA dimethylallyltransferase (325 aa).

11-18 is a binding site for ATP; it reads GPTASGKS. A substrate-binding site is contributed by 13–18; the sequence is TASGKS. Interaction with substrate tRNA stretches follow at residues 36–39 and 160–164; these read DSMQ and QRLIR.

It belongs to the IPP transferase family. Monomer. Requires Mg(2+) as cofactor.

The enzyme catalyses adenosine(37) in tRNA + dimethylallyl diphosphate = N(6)-dimethylallyladenosine(37) in tRNA + diphosphate. In terms of biological role, catalyzes the transfer of a dimethylallyl group onto the adenine at position 37 in tRNAs that read codons beginning with uridine, leading to the formation of N6-(dimethylallyl)adenosine (i(6)A). This is tRNA dimethylallyltransferase from Rickettsia canadensis (strain McKiel).